The chain runs to 94 residues: Small ribosomal subunit protein bS18 (94 aa).

The protein belongs to the bacterial ribosomal protein bS18 family. Part of the 30S ribosomal subunit. Forms a tight heterodimer with protein bS6.

Binds as a heterodimer with protein bS6 to the central domain of the 16S rRNA, where it helps stabilize the platform of the 30S subunit. This chain is Small ribosomal subunit protein bS18, found in Leptothrix cholodnii (strain ATCC 51168 / LMG 8142 / SP-6) (Leptothrix discophora (strain SP-6)).